Reading from the N-terminus, the 291-residue chain is tRNA (guanine-N(1)-)-methyltransferase (291 aa).

S-adenosyl-L-methionine-binding positions include Gly160 and 184–189 (IGDYVL).

This sequence belongs to the RNA methyltransferase TrmD family. Homodimer.

The protein resides in the cytoplasm. It carries out the reaction guanosine(37) in tRNA + S-adenosyl-L-methionine = N(1)-methylguanosine(37) in tRNA + S-adenosyl-L-homocysteine + H(+). In terms of biological role, specifically methylates guanosine-37 in various tRNAs. The polypeptide is tRNA (guanine-N(1)-)-methyltransferase (Corynebacterium efficiens (strain DSM 44549 / YS-314 / AJ 12310 / JCM 11189 / NBRC 100395)).